A 598-amino-acid polypeptide reads, in one-letter code: 2-succinyl-5-enolpyruvyl-6-hydroxy-3-cyclohexene-1-carboxylate synthase (598 aa).

It belongs to the TPP enzyme family. MenD subfamily. As to quaternary structure, homodimer. Mg(2+) is required as a cofactor. Requires Mn(2+) as cofactor. Thiamine diphosphate serves as cofactor.

It catalyses the reaction isochorismate + 2-oxoglutarate + H(+) = 5-enolpyruvoyl-6-hydroxy-2-succinyl-cyclohex-3-ene-1-carboxylate + CO2. The protein operates within quinol/quinone metabolism; 1,4-dihydroxy-2-naphthoate biosynthesis; 1,4-dihydroxy-2-naphthoate from chorismate: step 2/7. It participates in cofactor biosynthesis; phylloquinone biosynthesis. In terms of biological role, catalyzes the thiamine diphosphate-dependent decarboxylation of 2-oxoglutarate and the subsequent addition of the resulting succinic semialdehyde-thiamine pyrophosphate anion to isochorismate to yield 2-succinyl-5-enolpyruvyl-6-hydroxy-3-cyclohexene-1-carboxylate (SEPHCHC). This Prochlorococcus marinus (strain NATL2A) protein is 2-succinyl-5-enolpyruvyl-6-hydroxy-3-cyclohexene-1-carboxylate synthase.